A 197-amino-acid polypeptide reads, in one-letter code: uncharacterized protein (197 aa).

A helical membrane pass occupies residues 7 to 27 (PISVGQMVLICIFILIILFVI).

It belongs to the IIV-6 307L family.

The protein resides in the membrane. This is an uncharacterized protein from Acheta domesticus (House cricket).